The following is a 420-amino-acid chain: 2',3'-cyclic-nucleotide 3'-phosphodiesterase (420 aa).

Serine 9 carries the phosphoserine modification. Tyrosine 110 is subject to Phosphotyrosine. Phosphoserine is present on residues serine 169, serine 227, and serine 239. Histidine 250 functions as the Proton acceptor in the catalytic mechanism. Threonine 252 provides a ligand contact to substrate. Histidine 329 (proton donor) is an active-site residue. Threonine 331 contributes to the substrate binding site. Residue serine 358 is modified to Phosphoserine. A Cysteine methyl ester modification is found at cysteine 417. Cysteine 417 carries the S-farnesyl cysteine lipid modification. A propeptide spans 418 to 420 (TII) (removed in mature form).

It belongs to the 2H phosphoesterase superfamily. CNPase family. As to quaternary structure, exists as monomers and homodimers.

Its subcellular location is the membrane. It localises to the melanosome. The enzyme catalyses a nucleoside 2',3'-cyclic phosphate + H2O = a nucleoside 2'-phosphate + H(+). Its function is as follows. Catalyzes the formation of 2'-nucleotide products from 2',3'-cyclic substrates. May participate in RNA metabolism in the myelinating cell, CNP is the third most abundant protein in central nervous system myelin. In Mus musculus (Mouse), this protein is 2',3'-cyclic-nucleotide 3'-phosphodiesterase.